A 284-amino-acid polypeptide reads, in one-letter code: Tryptophan 2,3-dioxygenase (284 aa).

Substrate is bound by residues 51–55, tyrosine 113, and arginine 117; that span reads FIIQH. Histidine 240 provides a ligand contact to heme. Residue threonine 254 participates in substrate binding.

It belongs to the tryptophan 2,3-dioxygenase family. In terms of assembly, homotetramer. Heme is required as a cofactor.

The catalysed reaction is L-tryptophan + O2 = N-formyl-L-kynurenine. The protein operates within amino-acid degradation; L-tryptophan degradation via kynurenine pathway; L-kynurenine from L-tryptophan: step 1/2. In terms of biological role, heme-dependent dioxygenase that catalyzes the oxidative cleavage of the L-tryptophan (L-Trp) pyrrole ring and converts L-tryptophan to N-formyl-L-kynurenine. Catalyzes the oxidative cleavage of the indole moiety. This chain is Tryptophan 2,3-dioxygenase, found in Rhodococcus jostii (strain RHA1).